A 280-amino-acid polypeptide reads, in one-letter code: Probable 2-(5''-triphosphoribosyl)-3'-dephosphocoenzyme-A synthase (280 aa).

The protein belongs to the CitG/MdcB family.

It carries out the reaction 3'-dephospho-CoA + ATP = 2'-(5''-triphospho-alpha-D-ribosyl)-3'-dephospho-CoA + adenine. This chain is Probable 2-(5''-triphosphoribosyl)-3'-dephosphocoenzyme-A synthase, found in Lactiplantibacillus plantarum (strain ATCC BAA-793 / NCIMB 8826 / WCFS1) (Lactobacillus plantarum).